The sequence spans 117 residues: Ubiquitin-like protein pmt3/smt3 (117 aa).

The segment at 1–37 is disordered; it reads MSESPSANISDADKSAITPTTGDTSQQDVKPSTEHIN. Residues 17–30 show a composition bias toward polar residues; the sequence is ITPTTGDTSQQDVK. One can recognise a Ubiquitin-like domain in the interval 35–115; sequence HINLKVVGQD…LEQLGGCTHL (81 aa). Gly-111 participates in a covalent cross-link: Glycyl lysine isopeptide (Gly-Lys) (interchain with K-? in acceptor proteins). A propeptide spanning residues 112–117 is cleaved from the precursor; the sequence is CTHLCL.

Belongs to the ubiquitin family. SUMO subfamily. In terms of assembly, interacts with rfp1.

The protein resides in the nucleus. In terms of biological role, required for chromosome segregation where it may be involved in microtubule assembly. Loss of smt3 leads to an increase in telomere length. The polypeptide is Ubiquitin-like protein pmt3/smt3 (pmt3) (Schizosaccharomyces pombe (strain 972 / ATCC 24843) (Fission yeast)).